Here is a 296-residue protein sequence, read N- to C-terminus: Phosphatidylserine decarboxylase proenzyme (296 aa).

Active-site charge relay system; for autoendoproteolytic cleavage activity residues include Asp-113, His-169, and Ser-256. Residue Ser-256 is the Schiff-base intermediate with substrate; via pyruvic acid; for decarboxylase activity of the active site. Ser-256 carries the post-translational modification Pyruvic acid (Ser); by autocatalysis.

It belongs to the phosphatidylserine decarboxylase family. PSD-B subfamily. Prokaryotic type II sub-subfamily. Heterodimer of a large membrane-associated beta subunit and a small pyruvoyl-containing alpha subunit. Pyruvate is required as a cofactor. Post-translationally, is synthesized initially as an inactive proenzyme. Formation of the active enzyme involves a self-maturation process in which the active site pyruvoyl group is generated from an internal serine residue via an autocatalytic post-translational modification. Two non-identical subunits are generated from the proenzyme in this reaction, and the pyruvate is formed at the N-terminus of the alpha chain, which is derived from the carboxyl end of the proenzyme. The autoendoproteolytic cleavage occurs by a canonical serine protease mechanism, in which the side chain hydroxyl group of the serine supplies its oxygen atom to form the C-terminus of the beta chain, while the remainder of the serine residue undergoes an oxidative deamination to produce ammonia and the pyruvoyl prosthetic group on the alpha chain. During this reaction, the Ser that is part of the protease active site of the proenzyme becomes the pyruvoyl prosthetic group, which constitutes an essential element of the active site of the mature decarboxylase.

It is found in the cell membrane. The catalysed reaction is a 1,2-diacyl-sn-glycero-3-phospho-L-serine + H(+) = a 1,2-diacyl-sn-glycero-3-phosphoethanolamine + CO2. It functions in the pathway phospholipid metabolism; phosphatidylethanolamine biosynthesis; phosphatidylethanolamine from CDP-diacylglycerol: step 2/2. In terms of biological role, catalyzes the formation of phosphatidylethanolamine (PtdEtn) from phosphatidylserine (PtdSer). The chain is Phosphatidylserine decarboxylase proenzyme from Clostridium beijerinckii (strain ATCC 51743 / NCIMB 8052) (Clostridium acetobutylicum).